The chain runs to 178 residues: Vegetative protein (178 aa).

Disordered stretches follow at residues 67–102 and 138–158; these read AGRRGPGRPPAARSAVTAAPAAVGGKRRGRKPAAAG and NRRPSDWKDYADPDSVDDIKL. The segment covering 76 to 90 has biased composition (low complexity); it reads PAARSAVTAAPAAVG.

The protein is Vegetative protein (vegA) of Myxococcus xanthus.